Reading from the N-terminus, the 898-residue chain is Zinc finger protein 574 (898 aa).

C2H2-type zinc fingers lie at residues 16–38 (YVCS…QNSH), 76–98 (YQCL…QELH), and 126–148 (YECV…RQTH). Position 164 is a phosphoserine (Ser164). A C2H2-type 4 zinc finger spans residues 213 to 235 (YKCSECSQLFQMPADFLEHQATH). Positions 243-305 (AEEPATQQET…PRRSSSGESG (63 aa)) are disordered. The segment covering 273-290 (HSYELRNELRNGEAMGRD) has biased composition (basic and acidic residues). Ser301 carries the phosphoserine modification. 4 consecutive C2H2-type zinc fingers follow at residues 310-332 (LFCS…LRSH), 337-359 (FKCP…LGDH), 365-387 (FLCV…RRAH), and 393-414 (HSCP…RRTH). Residues 417–460 (GGVPLPTTPVPPEEPAISFPEPAPAETGELEAPELPVSEESSAE) are disordered. 6 consecutive C2H2-type zinc fingers follow at residues 467–490 (YRCL…RFVH), 496–518 (HKCS…LRTH), 524–546 (FPCP…RLTH), 552–574 (YRCG…RLVH), 580–602 (YRCQ…RYHH), and 608–631 (YKCR…LVVH). A C2H2-type 15; degenerate zinc finger spans residues 637-660 (HRCPSCGAAFPSSLRLREHRCAAA). The segment at 668-690 (FECGTCGKKVGSAARLQAHEAAH) adopts a C2H2-type 16 zinc-finger fold. The segment at 691–735 (AAAGPGEVLAKEPPAPRAARATRTPVAPSPTALGGTTSAAPAAPA) is disordered. Over residues 707-734 (RAARATRTPVAPSPTALGGTTSAAPAAP) the composition is skewed to low complexity. Ser719 carries the post-translational modification Phosphoserine. Thr726 bears the Phosphothreonine mark. 4 C2H2-type zinc fingers span residues 740–762 (LECS…RRIH), 768–790 (YPCP…RRLH), 796–818 (FACE…RRIH), and 824–846 (YSCP…RKTH). Position 834 is an asymmetric dimethylarginine (Arg834).

It belongs to the krueppel C2H2-type zinc-finger protein family.

It localises to the nucleus. Functionally, may be involved in transcriptional regulation. The polypeptide is Zinc finger protein 574 (Znf574) (Rattus norvegicus (Rat)).